The following is a 296-amino-acid chain: HVA22-like protein i (296 aa).

The interval 146-296 is disordered; that stretch reads STPRPQPPQK…LRKTRSEESR (151 aa). Over residues 180-193 the composition is skewed to low complexity; that stretch reads VSLSSSSSSSSSEN. A compositionally biased stretch (polar residues) spans 223 to 233; sequence AGTTQIAQKSV. Acidic residues predominate over residues 251–261; that stretch reads QIEEVEGEAES. Over residues 270-281 the composition is skewed to basic and acidic residues; the sequence is GPKETVMEETIR.

It belongs to the DP1 family.

In Arabidopsis thaliana (Mouse-ear cress), this protein is HVA22-like protein i (HVA22I).